The primary structure comprises 311 residues: Ketoisovalerate oxidoreductase subunit VorB (311 aa).

In terms of assembly, heterotetramer of one alpha, one beta, one delta and one gamma chain.

It carries out the reaction 3-methyl-2-oxobutanoate + 2 oxidized [2Fe-2S]-[ferredoxin] + CoA = 2-methylpropanoyl-CoA + 2 reduced [2Fe-2S]-[ferredoxin] + CO2 + H(+). This is Ketoisovalerate oxidoreductase subunit VorB (vorB) from Pyrococcus furiosus (strain ATCC 43587 / DSM 3638 / JCM 8422 / Vc1).